Here is a 652-residue protein sequence, read N- to C-terminus: Phosphoglucomutase 1, chloroplastic (652 aa).

Residues 1-84 constitute a chloroplast transit peptide; sequence MAFSAAASAS…LAARRTLRVR (84 aa). Alpha-D-glucose 1,6-bisphosphate-binding residues include R118 and S211. Catalysis depends on S211, which acts as the Phosphoserine intermediate. Mg(2+) is bound by residues S211, D376, D378, and D380. A Phosphoserine modification is found at S211. Positions 380, 381, 443, 462, 464, and 475 each coordinate alpha-D-glucose 1,6-bisphosphate.

It belongs to the phosphohexose mutase family. The cofactor is Mg(2+).

The protein localises to the plastid. Its subcellular location is the chloroplast. The catalysed reaction is alpha-D-glucose 1-phosphate = alpha-D-glucose 6-phosphate. The enzyme catalyses O-phospho-L-seryl-[protein] + alpha-D-glucose 1-phosphate = alpha-D-glucose 1,6-bisphosphate + L-seryl-[protein]. It catalyses the reaction alpha-D-glucose 1,6-bisphosphate + L-seryl-[protein] = O-phospho-L-seryl-[protein] + alpha-D-glucose 6-phosphate. Its activity is regulated as follows. Inhibited by the Calvin cycle intermediates fructose-1,6-bisphosphate and ribulose-1,5-bisphosphate. In terms of biological role, catalyzes the reversible isomerization of alpha-D-glucose 1-phosphate to alpha-D-glucose 6-phosphate. The mechanism proceeds via the intermediate compound alpha-D-glucose 1,6-bisphosphate. This enzyme participates in both the breakdown and synthesis of glucose. Required for sucrose production and accumulation necessary during plant development. Promotes gravitropic responses, negative in shoots but positive in roots, by facilitating starch granules (statoliths) formation. In Marchantia polymorpha (Common liverwort), this protein is Phosphoglucomutase 1, chloroplastic.